Here is a 292-residue protein sequence, read N- to C-terminus: Phosphatidylserine decarboxylase proenzyme (292 aa).

Active-site charge relay system; for autoendoproteolytic cleavage activity residues include D89, H146, and S252. Catalysis depends on S252, which acts as the Schiff-base intermediate with substrate; via pyruvic acid; for decarboxylase activity. The residue at position 252 (S252) is a Pyruvic acid (Ser); by autocatalysis.

This sequence belongs to the phosphatidylserine decarboxylase family. PSD-B subfamily. Prokaryotic type I sub-subfamily. As to quaternary structure, heterodimer of a large membrane-associated beta subunit and a small pyruvoyl-containing alpha subunit. Pyruvate is required as a cofactor. Is synthesized initially as an inactive proenzyme. Formation of the active enzyme involves a self-maturation process in which the active site pyruvoyl group is generated from an internal serine residue via an autocatalytic post-translational modification. Two non-identical subunits are generated from the proenzyme in this reaction, and the pyruvate is formed at the N-terminus of the alpha chain, which is derived from the carboxyl end of the proenzyme. The autoendoproteolytic cleavage occurs by a canonical serine protease mechanism, in which the side chain hydroxyl group of the serine supplies its oxygen atom to form the C-terminus of the beta chain, while the remainder of the serine residue undergoes an oxidative deamination to produce ammonia and the pyruvoyl prosthetic group on the alpha chain. During this reaction, the Ser that is part of the protease active site of the proenzyme becomes the pyruvoyl prosthetic group, which constitutes an essential element of the active site of the mature decarboxylase.

It is found in the cell membrane. It catalyses the reaction a 1,2-diacyl-sn-glycero-3-phospho-L-serine + H(+) = a 1,2-diacyl-sn-glycero-3-phosphoethanolamine + CO2. It functions in the pathway phospholipid metabolism; phosphatidylethanolamine biosynthesis; phosphatidylethanolamine from CDP-diacylglycerol: step 2/2. Functionally, catalyzes the formation of phosphatidylethanolamine (PtdEtn) from phosphatidylserine (PtdSer). The chain is Phosphatidylserine decarboxylase proenzyme from Shewanella sp. (strain ANA-3).